Consider the following 129-residue polypeptide: Cytochrome c3 (129 aa).

Positions 1–22 are cleaved as a signal peptide; sequence MRKLFFCGVLALAVAFALPVVA. Residues histidine 44, histidine 47, cysteine 52, cysteine 55, histidine 56, histidine 57, cysteine 68, cysteine 73, histidine 74, histidine 92, cysteine 101, cysteine 104, histidine 105, cysteine 122, cysteine 127, and histidine 128 each coordinate heme c.

Post-translationally, binds 4 heme c groups per subunit.

It is found in the periplasm. Its function is as follows. Participates in sulfate respiration coupled with phosphorylation by transferring electrons from the enzyme dehydrogenase to ferredoxin. The protein is Cytochrome c3 of Nitratidesulfovibrio vulgaris (strain ATCC 29579 / DSM 644 / CCUG 34227 / NCIMB 8303 / VKM B-1760 / Hildenborough) (Desulfovibrio vulgaris).